The primary structure comprises 598 residues: Serine/threonine-protein kinase PLK1 (598 aa).

The interval 1–26 is disordered; the sequence is MAQVAGKKLTVAPEAGKPPGIPGSSS. Serine 25 and serine 26 each carry phosphoserine. Positions 44-296 constitute a Protein kinase domain; the sequence is YLRGRFLGKG…IDDLLNDEFF (253 aa). ATP is bound by residues 50-58, lysine 73, and glutamate 122; that span reads LGKGGFAKC. Aspartate 167 acts as the Proton acceptor in catalysis. Residues 169 to 172 and aspartate 185 contribute to the ATP site; that span reads KLGN. Residues 185–212 form an activation loop region; the sequence is DFGLATKVEYDGERKKTLCGTPNYIAPE. Residue threonine 201 is modified to Phosphothreonine. Residues serine 260 and serine 326 each carry the phosphoserine; by autocatalysis modification. A D-box that targets the protein for proteasomal degradation in anaphase motif is present at residues 328-331; sequence RKPL. The segment at 336-360 is disordered; that stretch reads KGQDSPLVEKQSVPAKEEEMQQPES. Serine 340 is modified (phosphoserine). In terms of domain architecture, POLO box 1 spans 404-482; it reads WVSKWVDYSD…LKYFRNYMSE (79 aa). The tract at residues 487–501 is linker; sequence AGANITPREGDELAR. The POLO box 2 domain occupies 504–586; the sequence is FLRTWFRTRS…ARTMVEKLQS (83 aa). The interval 532 to 534 is important for interaction with phosphorylated proteins; sequence HTK.

The protein belongs to the protein kinase superfamily. Ser/Thr protein kinase family. Interacts with plk1 and kif2a. Interacts with fbxo5. Activated by phosphorylation on Thr-201 during M phase. In terms of processing, protein levels are down-regulated by proteasomal degradation in anaphase.

Its subcellular location is the nucleus. It localises to the cytoplasm. It is found in the cytoskeleton. The protein localises to the microtubule organizing center. The protein resides in the centrosome. Its subcellular location is the spindle. It localises to the midbody. It carries out the reaction L-seryl-[protein] + ATP = O-phospho-L-seryl-[protein] + ADP + H(+). It catalyses the reaction L-threonyl-[protein] + ATP = O-phospho-L-threonyl-[protein] + ADP + H(+). Plays multiple essential roles during mitosis. Phosphorylates the N-terminal domain of cdc25, which leads to cyclin b-cdc2 activation and mitotic entry. Also required for organization of bipolar spindles, and for exit from mitosis. Phosphorylates tpx2. The sequence is that of Serine/threonine-protein kinase PLK1 (plk1) from Xenopus tropicalis (Western clawed frog).